A 519-amino-acid chain; its full sequence is Baeyer-Villiger monooxygenase (519 aa).

FAD contacts are provided by residues glutamate 41, 49-52, aspartate 61, tyrosine 67, and valine 110; that span reads TWRD. 59–61 contacts NADP(+); it reads ACD. Residues 183–189, 206–207, and 292–293 each bind NADP(+); these read TGASAIQ, RT, and KR. Residue methionine 399 coordinates FAD. The interval 499–519 is disordered; that stretch reads GAKAAEADTGADTGADAEVSA.

Belongs to the FAD-binding monooxygenase family. Requires FAD as cofactor.

Catalyzes a Baeyer-Villiger oxidation reaction, i.e. the insertion of an oxygen atom into a carbon-carbon bond adjacent to a carbonyl, which converts ketones to esters or lactones using NADPH and/or NADH as an electron donor. Thus, can convert bicyclo[3.2.0]hept-2-en-6-one into the oxidative lactone products 2-oxabicyclo[3.3.0]oct-6-en-3-one and 3-oxabicyclo[3.3.0]oct-6-en-2-one. Is also able to catalyze the sulfoxidation of methyl phenyl sulfide (thioanisole). This chain is Baeyer-Villiger monooxygenase, found in Streptomyces coelicolor (strain ATCC BAA-471 / A3(2) / M145).